The following is a 504-amino-acid chain: MSPIRSKKKIKNEPRLTVDDVNVVPPKKIRPAIKGTVVGNFMEWYDFGIYGYLTVTMTAVFTQGLPQEWQLLAVMFGFAVSYLVRPLGGLVLGPLGDKVGRQKVLYVTMAMMAVSTALIGLLPTAASIGAWALVLLYLLKMVQGFSTGGEYAGATTYVAEFAPDRRRGFFGAFLDMGSYLGFAAGASVVAITTWVTTHFYGATAMEDFGWRIPFLTAIPLGIIAVYLRTRIPETPAFENNQDEPNAVVEKDTEDPYARLGLAGVIRHHWRPLLIGIAIVAATNTAGYALTSYMPVYLEEQIGLHSASAAAVTVPILVVMSLLLPFVGMWSDRVGRKPVYATAVAATLILMVPAFLIMNTGTIGAVLIALSMVAIPTGLYVALSASALPALFPTASRFSGMGISYNISVSLFGGTTPLITQFLLQKTGLDIVPALYIMFFSAIAGVALLFMTESSQKPLLGSFPTVETKSEAVEIVKNQDEDPNIDLSHMPFPDEENVGAEKQNA.

11 helical membrane-spanning segments follow: residues 41–61 (FMEW…TAVF), 71–91 (LLAV…GGLV), 118–138 (LIGL…LLYL), 169–189 (FFGA…ASVV), 207–227 (DFGW…AVYL), 272–292 (LLIG…LTSY), 309–329 (AAVT…VGMW), 337–357 (PVYA…FLIM), 362–382 (IGAV…YVAL), 399–419 (GMGI…PLIT), and 430–450 (IVPA…LLFM). Residues 477-504 (NQDEDPNIDLSHMPFPDEENVGAEKQNA) are disordered.

It belongs to the major facilitator superfamily.

It is found in the cell membrane. Its activity is regulated as follows. Uptake is activated by osmotic stress. Inhibited by CCCP. In terms of biological role, involved in the uptake of osmoprotectants. Can transport ectoine and proline. Protons are probably the coupling ions. This is Ectoine/proline transporter ProP from Corynebacterium glutamicum (strain ATCC 13032 / DSM 20300 / JCM 1318 / BCRC 11384 / CCUG 27702 / LMG 3730 / NBRC 12168 / NCIMB 10025 / NRRL B-2784 / 534).